We begin with the raw amino-acid sequence, 488 residues long: Ribulose bisphosphate carboxylase large chain (488 aa).

Residues Asn-127 and Thr-177 each contribute to the substrate site. Lys-179 (proton acceptor) is an active-site residue. Residue Lys-181 participates in substrate binding. Mg(2+) contacts are provided by Lys-205, Asp-207, and Glu-208. Residue Lys-205 is modified to N6-carboxylysine. His-297 serves as the catalytic Proton acceptor. Substrate contacts are provided by Arg-298, His-330, and Ser-382.

Belongs to the RuBisCO large chain family. Type I subfamily. In terms of assembly, heterohexadecamer of 8 large chains and 8 small chains. The cofactor is Mg(2+).

It is found in the plastid. Its subcellular location is the chloroplast. The enzyme catalyses 2 (2R)-3-phosphoglycerate + 2 H(+) = D-ribulose 1,5-bisphosphate + CO2 + H2O. The catalysed reaction is D-ribulose 1,5-bisphosphate + O2 = 2-phosphoglycolate + (2R)-3-phosphoglycerate + 2 H(+). Its function is as follows. RuBisCO catalyzes two reactions: the carboxylation of D-ribulose 1,5-bisphosphate, the primary event in carbon dioxide fixation, as well as the oxidative fragmentation of the pentose substrate in the photorespiration process. Both reactions occur simultaneously and in competition at the same active site. The sequence is that of Ribulose bisphosphate carboxylase large chain from Porphyridium aerugineum (Red microalga).